A 480-amino-acid polypeptide reads, in one-letter code: Uronate isomerase (480 aa).

This sequence belongs to the metallo-dependent hydrolases superfamily. Uronate isomerase family.

It catalyses the reaction D-glucuronate = D-fructuronate. The enzyme catalyses aldehydo-D-galacturonate = keto-D-tagaturonate. It functions in the pathway carbohydrate metabolism; pentose and glucuronate interconversion. In Phenylobacterium zucineum (strain HLK1), this protein is Uronate isomerase.